The chain runs to 164 residues: Protein PPLZ02 (164 aa).

A DNA-binding region (AP2/ERF) is located at residues 7–64; the sequence is RYRGFRQRHWGSWVSEIRHSILKTRIWQGTFESAEDAARAYDEAARLMCGTRARTNFP.

It localises to the nucleus. Functionally, essential for all lupin cells independent of the respective tissue. The chain is Protein PPLZ02 (PPLZ02) from Lupinus polyphyllus (Large-leaved lupine).